The primary structure comprises 370 residues: Phosphate-binding protein PstS2 (370 aa).

An N-terminal signal peptide occupies residues M1–A22. C23 carries N-palmitoyl cysteine lipidation. The S-diacylglycerol cysteine moiety is linked to residue C23. Phosphate-binding positions include S54 to A56, S84, D102, and S191 to T193.

This sequence belongs to the PstS family. As to quaternary structure, the complex is composed of two ATP-binding proteins (PstB), two transmembrane proteins (PstC and PstA) and a solute-binding protein (PstS).

It is found in the cell membrane. It localises to the secreted. Its function is as follows. Functions in inorganic phosphate uptake, a phosphate-binding protein, although probably not the main uptake protein under phosphate starvation. Part of the ABC transporter complex PstSACB involved in phosphate import. The chain is Phosphate-binding protein PstS2 (pstS2) from Mycobacterium bovis (strain BCG / Pasteur 1173P2).